Reading from the N-terminus, the 280-residue chain is 2-dehydro-3-deoxyphosphooctonate aldolase (280 aa).

This sequence belongs to the KdsA family.

It localises to the cytoplasm. It catalyses the reaction D-arabinose 5-phosphate + phosphoenolpyruvate + H2O = 3-deoxy-alpha-D-manno-2-octulosonate-8-phosphate + phosphate. It participates in carbohydrate biosynthesis; 3-deoxy-D-manno-octulosonate biosynthesis; 3-deoxy-D-manno-octulosonate from D-ribulose 5-phosphate: step 2/3. The protein operates within bacterial outer membrane biogenesis; lipopolysaccharide biosynthesis. The protein is 2-dehydro-3-deoxyphosphooctonate aldolase of Thiobacillus denitrificans (strain ATCC 25259 / T1).